The primary structure comprises 425 residues: L-lysine N6-monooxygenase (425 aa).

Residue isoleucine 8–proline 14 participates in FAD binding.

The protein belongs to the lysine N(6)-hydroxylase/L-ornithine N(5)-oxygenase family. It depends on FAD as a cofactor.

It is found in the cytoplasm. It localises to the cell membrane. It catalyses the reaction L-lysine + NADPH + O2 = N(6)-hydroxy-L-lysine + NADP(+) + H2O. It participates in siderophore biosynthesis; aerobactin biosynthesis. Flavoprotein monooxygenase required for N-hydroxylation of lysine. Involved in the biosynthesis of the siderophore aerobactin which is a chelator that mediates the high-affinity iron transport systems induced by the organism under iron-stressed conditions. The chain is L-lysine N6-monooxygenase from Escherichia coli.